Consider the following 221-residue polypeptide: ATP-dependent Clp protease proteolytic subunit 1, mitochondrial (221 aa).

A mitochondrion-targeting transit peptide spans 1 to 25; that stretch reads MLRRLVTSSLSASRSMSASVQSRVG. Serine 120 serves as the catalytic Nucleophile. The active site involves histidine 145.

It belongs to the peptidase S14 family. In terms of assembly, tetradecamer that assembles into a two heptameric rings with a central cavity. In terms of tissue distribution, expressed in the intestine.

The protein localises to the mitochondrion matrix. The catalysed reaction is Hydrolysis of proteins to small peptides in the presence of ATP and magnesium. alpha-casein is the usual test substrate. In the absence of ATP, only oligopeptides shorter than five residues are hydrolyzed (such as succinyl-Leu-Tyr-|-NHMec, and Leu-Tyr-Leu-|-Tyr-Trp, in which cleavage of the -Tyr-|-Leu- and -Tyr-|-Trp bonds also occurs).. Its function is as follows. Clp cleaves peptides in various proteins in a process that requires ATP hydrolysis. Clp may be responsible for a fairly general and central housekeeping function rather than for the degradation of specific substrates. In Caenorhabditis elegans, this protein is ATP-dependent Clp protease proteolytic subunit 1, mitochondrial (clpp-1).